The primary structure comprises 1485 residues: MSSQDESASSSDTGEGGHVFGRENLNQSADYGYKTGSSASTHSTTDDAISEEPQPSGNGPRSIIARAYQLEMFQASMQQNIIVSMDTGSGKTQVAVLRIRAELERTPPEKRVWFLAPTVALCAQQYEVIRSQIKVANSIVMTGDDNVDSWSDVQTWDAVLANVRVVVCTYMILFEALSHAFVTMDSISLLVMDEAHNCTGKFPGRLIMKRFYMPRKSAGDHVPHILGLTASPVMKSDLSSMEDLESSLDSVCRGPTLQREELFANVHQPTMTVTTYKECDLRSPVQYTRNMNNLHLAFENLDIAEDPYVLHLMGQRTPKSLRELDRILTKLDTYTQNQMKALQRKSSSLFRELGQWAVDSYIYNVVEKVSNLDARSSWLGGWLDDEQRYLHRAIQGINALPVSAAIPAPEMTSIKLQVLLRILRGYEGSPVGIVFVKERATAGILSQLLAIIPDINARYKVGCMVGTSRYMSRKMNIHEVLQQGDDLLALEKFRSGAINLLVATSVLEEGIDVPVCNLVICFDMPANLKSFIQRRGRARMRESKLHLMIEEDSLVSVKDWGALEAAMKQRYENDMRELDHLAQVEEEDEMDVPPLHSRTTAAKVTVDDAKGHLEHFCRVVTRSQQYVDASPEYLVTTKTTAFVGGKPIPILGVTVLLPASLPPNLRQAHSSRDWISERNAKKDAALQAYKMLYEAGLINEHLLPIRESDFVDREVDGRPGLLEVQEQWNPWPCIVEAWETGLSSQTIHRRRLQLTDQDGMLMGELDALLPVPFPPISILKLYWIQHSEHPWTISFDPDVTMSGPGSTDPSFEIQQALDQTQILLDMAFGHRFSVSEQSKALRFIWPNRTLKLQMIGGQPFSKKAGEAHSSDYIIRSYGRDPYIYKSWVPVKPPLELVRGYWKAKPDEEEPPADAPWVVVKRLPKNCGFVKNSRIPIELPKEYQTSSPRRFDYIIPEQLCTFDTVPATLVQLGMLVPSITQAMEPYFVAQELLRRTALGSLDFKDIDLVMMVITSSSAGRLTNYERVEFLGDAVLKLGAAVTCATNNLHFPEGYLSLLKDRLVSNSRLCKAATALGLDQFIITRQYSLKQWRNMLTAPEPPTNTRKMSSKTLADVTEALIGAAYIEGGMSKALRCISLMIPNERWRSLDESRAVLYQVALNDIPLPSTLGPLEELLGYSFNKKSLLIEAITHASYNIPGSAGSSLERLEFLGDSVLDFVVVARLFSVKDPAPIEHYNMHLLRTAVVNGEFLGFLAMEWRTAATQRSVVVRTGQGTADELETVETPGLPLFGFLRHNASGDWVRDQQLAEERHAEMAPGIRDALEHGQRYPWDLLARLRISKVHSDVLEAVIGAVWVDSGSLEECEKLIERVGILRYLDRALRDGVKILHPKEELGRVAQNNKVVYKVDKAKRAARAEVYEVSGELAEGEDVEFLCSVTVGDRCVARVGGAVSKNDAMTKAALEVIRVWEEAGRSWDNVGVVLEEGV.

Residues 1–11 (MSSQDESASSS) show a composition bias toward low complexity. The segment at 1–61 (MSSQDESASS…EPQPSGNGPR (61 aa)) is disordered. The Helicase ATP-binding domain occupies 72 to 250 (MFQASMQQNI…MEDLESSLDS (179 aa)). 85 to 92 (MDTGSGKT) serves as a coordination point for ATP. The short motif at 193–196 (DEAH) is the DEAH box element. Residues 415–579 (KLQVLLRILR…RYENDMRELD (165 aa)) form the Helicase C-terminal domain. Residues 609–712 (AKGHLEHFCR…LPIRESDFVD (104 aa)) enclose the Dicer dsRNA-binding fold domain. RNase III domains are found at residues 988–1127 (AQEL…IEGG) and 1168–1358 (LGPL…VDSG). Residues E1208, D1344, and E1347 each coordinate Mg(2+). One can recognise a DRBM domain in the interval 1388 to 1469 (HPKEELGRVA…ALEVIRVWEE (82 aa)).

Belongs to the helicase family. Dicer subfamily. The cofactor is Mg(2+). Mn(2+) serves as cofactor.

Functionally, dicer-like endonuclease involved in cleaving double-stranded RNA in the RNA interference (RNAi) pathway. Produces 21 to 25 bp dsRNAs (siRNAs) which target the selective destruction of homologous RNAs leading to sequence-specific suppression of gene expression, called post-transcriptional gene silencing (PTGS). Part of a broad host defense response against viral infection and transposons. The sequence is that of Dicer-like protein 2 (DCL2) from Pyricularia oryzae (strain 70-15 / ATCC MYA-4617 / FGSC 8958) (Rice blast fungus).